Consider the following 430-residue polypeptide: Tol-Pal system protein TolB (430 aa).

Residues 1 to 26 form the signal peptide; the sequence is MSLMTKLGLRTLVASCLIAVGGAANA.

This sequence belongs to the TolB family. In terms of assembly, the Tol-Pal system is composed of five core proteins: the inner membrane proteins TolA, TolQ and TolR, the periplasmic protein TolB and the outer membrane protein Pal. They form a network linking the inner and outer membranes and the peptidoglycan layer.

Its subcellular location is the periplasm. In terms of biological role, part of the Tol-Pal system, which plays a role in outer membrane invagination during cell division and is important for maintaining outer membrane integrity. The sequence is that of Tol-Pal system protein TolB from Paraburkholderia xenovorans (strain LB400).